Here is a 259-residue protein sequence, read N- to C-terminus: Hydroxyacylglutathione hydrolase (259 aa).

Zn(2+) contacts are provided by H56, H58, D60, H61, H112, D133, and H171.

Belongs to the metallo-beta-lactamase superfamily. Glyoxalase II family. Monomer. Requires Zn(2+) as cofactor.

The catalysed reaction is an S-(2-hydroxyacyl)glutathione + H2O = a 2-hydroxy carboxylate + glutathione + H(+). The protein operates within secondary metabolite metabolism; methylglyoxal degradation; (R)-lactate from methylglyoxal: step 2/2. Thiolesterase that catalyzes the hydrolysis of S-D-lactoyl-glutathione to form glutathione and D-lactic acid. This chain is Hydroxyacylglutathione hydrolase, found in Pseudomonas putida (strain ATCC 700007 / DSM 6899 / JCM 31910 / BCRC 17059 / LMG 24140 / F1).